A 465-amino-acid polypeptide reads, in one-letter code: Siroheme synthase (465 aa).

Residues 1-203 (MEYLPLFHNL…GRTAEAERLL (203 aa)) are precorrin-2 dehydrogenase /sirohydrochlorin ferrochelatase. NAD(+) is bound by residues 22-23 (EI) and 43-44 (PS). Phosphoserine is present on S128. Residues 216-465 (GEVYLVGAGP…WFEGAQAAGR (250 aa)) are uroporphyrinogen-III C-methyltransferase. P225 is an S-adenosyl-L-methionine binding site. D248 functions as the Proton acceptor in the catalytic mechanism. The active-site Proton donor is the K270. S-adenosyl-L-methionine contacts are provided by residues 301–303 (GGD), I306, 331–332 (TA), M383, and G412.

In the N-terminal section; belongs to the precorrin-2 dehydrogenase / sirohydrochlorin ferrochelatase family. This sequence in the C-terminal section; belongs to the precorrin methyltransferase family.

It catalyses the reaction uroporphyrinogen III + 2 S-adenosyl-L-methionine = precorrin-2 + 2 S-adenosyl-L-homocysteine + H(+). The enzyme catalyses precorrin-2 + NAD(+) = sirohydrochlorin + NADH + 2 H(+). It carries out the reaction siroheme + 2 H(+) = sirohydrochlorin + Fe(2+). It participates in cofactor biosynthesis; adenosylcobalamin biosynthesis; precorrin-2 from uroporphyrinogen III: step 1/1. It functions in the pathway cofactor biosynthesis; adenosylcobalamin biosynthesis; sirohydrochlorin from precorrin-2: step 1/1. Its pathway is porphyrin-containing compound metabolism; siroheme biosynthesis; precorrin-2 from uroporphyrinogen III: step 1/1. The protein operates within porphyrin-containing compound metabolism; siroheme biosynthesis; siroheme from sirohydrochlorin: step 1/1. It participates in porphyrin-containing compound metabolism; siroheme biosynthesis; sirohydrochlorin from precorrin-2: step 1/1. Its function is as follows. Multifunctional enzyme that catalyzes the SAM-dependent methylations of uroporphyrinogen III at position C-2 and C-7 to form precorrin-2 via precorrin-1. Then it catalyzes the NAD-dependent ring dehydrogenation of precorrin-2 to yield sirohydrochlorin. Finally, it catalyzes the ferrochelation of sirohydrochlorin to yield siroheme. This is Siroheme synthase from Stutzerimonas stutzeri (strain A1501) (Pseudomonas stutzeri).